The chain runs to 280 residues: MTVTDIILIHGALNRGACYDAVVPLLEARGYRVHAPDLTGHTPGDGGHLSVVDMEHYTRPVADILARAEGQSILLGHSLGGASISWLAQHHPDKVAGLIYLTAVLTAPGITPETFVLPGEPNRGTPHALDLIQPVDEGRGLQADFSRLERLREVFMGDYPGEGMPPAEQFIQTQSTVPFGTPNPMEGRALEIPRLYIEALDDVVIPIAVQRQMQKEFPGPVAVVSLPASHAPYYSMPERLAEAIADFADAPAEYRQTATKAGPDRPAGADGGRADRADLP.

Residues aspartate 202 and histidine 230 each act as charge relay system in the active site. Positions 254–280 (YRQTATKAGPDRPAGADGGRADRADLP) are disordered.

This sequence belongs to the AB hydrolase superfamily. As to quaternary structure, monomer.

It carries out the reaction (-)-trans-permethrin + H2O = (3-phenoxyphenyl)methanol + (1S,3R)-3-(2,2-dichlorovinyl)-2,2-dimethylcyclopropanecarboxylate + H(+). Functionally, catalyzes the hydrolysis of pyrethroids pesticides. Catalyzes the hydrolysis of cypermethrin to equimolar amounts of cyano-3-phenoxybenzyl alcohol and 2,2-dimethyl-3-(2,2-dichlorovinyl)-cyclopropanecarboxylic acid. Hydrolyzes cis-permethrin at approximately equal rate to trans-permethrin. This is Pyrethroid hydrolase (pytH) from Sphingobium wenxiniae (strain DSM 21828 / CGMCC 1.7748 / JZ-1).